A 365-amino-acid chain; its full sequence is 3-isopropylmalate dehydrogenase (365 aa).

78–91 (GPKWDTLPAEERPE) contributes to the NAD(+) binding site. Positions 99, 109, 138, and 227 each coordinate substrate. D227, D251, and D255 together coordinate Mg(2+). 285–297 (GSAPDIAGKNIAN) is a binding site for NAD(+).

Belongs to the isocitrate and isopropylmalate dehydrogenases family. LeuB type 1 subfamily. In terms of assembly, homodimer. Mg(2+) serves as cofactor. Requires Mn(2+) as cofactor.

Its subcellular location is the cytoplasm. It carries out the reaction (2R,3S)-3-isopropylmalate + NAD(+) = 4-methyl-2-oxopentanoate + CO2 + NADH. It functions in the pathway amino-acid biosynthesis; L-leucine biosynthesis; L-leucine from 3-methyl-2-oxobutanoate: step 3/4. Functionally, catalyzes the oxidation of 3-carboxy-2-hydroxy-4-methylpentanoate (3-isopropylmalate) to 3-carboxy-4-methyl-2-oxopentanoate. The product decarboxylates to 4-methyl-2 oxopentanoate. In Syntrophotalea carbinolica (strain DSM 2380 / NBRC 103641 / GraBd1) (Pelobacter carbinolicus), this protein is 3-isopropylmalate dehydrogenase.